The primary structure comprises 396 residues: MTFRTLDTADLAGKRALVRVDFNVPVDGGKVADDTRLKAALPTIRFLADKGAKVVLLAHFDRPKGKVVPEMSLAFVAEPLAALLGAPVAFVGDCVGPAAAEVVNGLADGGVALLENVRFHAGEEKNDAEFAKALAANGDVYVNDAFSAAHRAHASTEGLAKLLPAYPGVSMQRELEALDAALGNPKKPVIGIVGGSKVSTKLDLLNNLVAKLDRLAIGGGMANTFLFAQGHDVGGSLCEKDLADTAREIMEKAKAAGCELLLPVDVVVAKKVAPGVETAVRSLSEVQADDLILDAGPESAKRLLAAMDQSLTLIWNGPLGVFEVPPFDEATVSAAKHAASLAKSGKIVAVAGGGDTVAALNHAGVSADFTFVSTAGGAFLEWMEGKTLPGVAALES.

Residues 21–23 (DFN), Arg36, 59–62 (HFDR), Arg118, and Arg151 contribute to the substrate site. Residues Lys201, Glu323, and 353-356 (GGDT) each bind ATP.

The protein belongs to the phosphoglycerate kinase family. As to quaternary structure, monomer.

It localises to the cytoplasm. It carries out the reaction (2R)-3-phosphoglycerate + ATP = (2R)-3-phospho-glyceroyl phosphate + ADP. The protein operates within carbohydrate degradation; glycolysis; pyruvate from D-glyceraldehyde 3-phosphate: step 2/5. The protein is Phosphoglycerate kinase of Caulobacter vibrioides (strain ATCC 19089 / CIP 103742 / CB 15) (Caulobacter crescentus).